The chain runs to 93 residues: UPF0390 protein C24B10.18 (93 aa).

A disordered region spans residues 1–32 (MAQGEFKKKKNSSANKGGRVTKHSKNPKKGAR). Over residues 19–31 (RVTKHSKNPKKGA) the composition is skewed to basic residues.

Belongs to the UPF0390 family.

The chain is UPF0390 protein C24B10.18 from Schizosaccharomyces pombe (strain 972 / ATCC 24843) (Fission yeast).